The sequence spans 291 residues: N-acetylmannosamine kinase (291 aa).

Residues 5-12 (AIDIGGTK) and 132-139 (GVGGGVVC) each bind ATP. Zn(2+) is bound by residues histidine 156, cysteine 166, cysteine 168, and cysteine 173.

This sequence belongs to the ROK (NagC/XylR) family. NanK subfamily. As to quaternary structure, homodimer.

It carries out the reaction an N-acyl-D-mannosamine + ATP = an N-acyl-D-mannosamine 6-phosphate + ADP + H(+). It functions in the pathway amino-sugar metabolism; N-acetylneuraminate degradation; D-fructose 6-phosphate from N-acetylneuraminate: step 2/5. Catalyzes the phosphorylation of N-acetylmannosamine (ManNAc) to ManNAc-6-P. The sequence is that of N-acetylmannosamine kinase from Salmonella agona (strain SL483).